The following is a 327-amino-acid chain: S-adenosylmethionine/S-adenosylhomocysteine transporter (327 aa).

10 helical membrane-spanning segments follow: residues 22 to 42, 53 to 73, 85 to 105, 114 to 134, 143 to 163, 165 to 185, 202 to 222, 240 to 260, 271 to 291, and 294 to 314; these read CDMAIFLIFLNAFIWSSSFAL, LFVTGSRMVLAGVVLFGLLLC, IMPIVLLSVIGFYLTNVLEFI, TACFIYGFSPFTAAFCSYVQL, LGGLSLGLVSYLVYLLFGGSE, VAEWGWQLGLPELLLIAATCL, SLSMTAINAYAMVIAGVLSLI, LFLQAIGALVIFSNLICYNLF, FLSFCNLVMPLFASFFGWLLL, and SFPPGLLFAVGFMVLGCRLIY. An EamA 1 domain is found at 34 to 157; that stretch reads FIWSSSFALS…LGLVSYLVYL (124 aa). Residues 189–313 enclose the EamA 2 domain; that stretch reads GWTLLRKLGR…GFMVLGCRLI (125 aa).

This sequence belongs to the drug/metabolite transporter (DMT) superfamily. 10 TMS drug/metabolite exporter (DME) (TC 2.A.7.3) family.

Its subcellular location is the cell membrane. CCCP treatment reduces SAM intracellular uptake by 50%. Functionally, transports S-adenosylmethionine (SAM) and S-adenosylhomocysteine (SAH). Allows bacteria to acquire SAM from the eukaryotic host cell and to likely remove the toxic by-product SAH. The sequence is that of S-adenosylmethionine/S-adenosylhomocysteine transporter from Chlamydia trachomatis serovar L2 (strain ATCC VR-902B / DSM 19102 / 434/Bu).